A 1079-amino-acid polypeptide reads, in one-letter code: Spermatogenesis-associated protein 31G1 (1079 aa).

Disordered regions lie at residues Glu97–Gly145, Glu261–Val281, Gly297–Leu317, Lys331–Leu362, Glu376–Pro412, Asn506–Pro566, Val637–Lys678, and Pro840–Ala975. A compositionally biased stretch (acidic residues) spans Val98–Ser113. A compositionally biased stretch (pro residues) spans Phe336–Gln345. Basic and acidic residues predominate over residues Leu398–Pro412. 2 stretches are compositionally biased toward low complexity: residues Asn551–Leu562 and Ser645–Ser655. Over residues Pro669–Lys678 the composition is skewed to basic and acidic residues. Over residues Ala942–Pro951 the composition is skewed to basic residues.

In terms of biological role, dispensable for normal development and fertility. This is Spermatogenesis-associated protein 31G1 from Homo sapiens (Human).